A 450-amino-acid chain; its full sequence is Gluconate permease (450 aa).

12 helical membrane-spanning segments follow: residues 6–26, 30–50, 60–80, 116–136, 142–162, 183–203, 233–253, 269–289, 312–332, 338–358, 366–386, and 430–450; these read HDAY…VLIT, VHPF…SGMP, DGFG…TMLG, VGIP…VFIV, VSLI…HGLV, ILYG…LFGA, FGVT…KTFA, MIGH…YTFG, AIVM…ASGV, HLAV…AAVI, TVAT…IPGV, and AMET…SLVL.

It belongs to the GntP permease family.

The protein localises to the cell inner membrane. It functions in the pathway carbohydrate acid metabolism; D-gluconate degradation. In Pseudomonas aeruginosa (strain ATCC 15692 / DSM 22644 / CIP 104116 / JCM 14847 / LMG 12228 / 1C / PRS 101 / PAO1), this protein is Gluconate permease (gnuT).